A 303-amino-acid chain; its full sequence is tRNA dimethylallyltransferase (303 aa).

12–19 (GTTASGKS) lines the ATP pocket. 14 to 19 (TASGKS) contributes to the substrate binding site. Residues 37–40 (DSRQ) form an interaction with substrate tRNA region.

The protein belongs to the IPP transferase family. In terms of assembly, monomer. The cofactor is Mg(2+).

The catalysed reaction is adenosine(37) in tRNA + dimethylallyl diphosphate = N(6)-dimethylallyladenosine(37) in tRNA + diphosphate. Functionally, catalyzes the transfer of a dimethylallyl group onto the adenine at position 37 in tRNAs that read codons beginning with uridine, leading to the formation of N6-(dimethylallyl)adenosine (i(6)A). In Synechocystis sp. (strain ATCC 27184 / PCC 6803 / Kazusa), this protein is tRNA dimethylallyltransferase.